We begin with the raw amino-acid sequence, 267 residues long: NH(3)-dependent NAD(+) synthetase (267 aa).

38–45 lines the ATP pocket; the sequence is GISGGVDS. Aspartate 44 lines the Mg(2+) pocket. Position 123 (arginine 123) interacts with deamido-NAD(+). ATP is bound at residue threonine 143. Residue glutamate 148 coordinates Mg(2+). The deamido-NAD(+) site is built by lysine 156 and aspartate 163. Residues lysine 172 and serine 193 each contribute to the ATP site. Position 250-251 (250-251) interacts with deamido-NAD(+); that stretch reads HK.

It belongs to the NAD synthetase family. In terms of assembly, homodimer.

The enzyme catalyses deamido-NAD(+) + NH4(+) + ATP = AMP + diphosphate + NAD(+) + H(+). It participates in cofactor biosynthesis; NAD(+) biosynthesis; NAD(+) from deamido-NAD(+) (ammonia route): step 1/1. In terms of biological role, catalyzes the ATP-dependent amidation of deamido-NAD to form NAD. Uses ammonia as a nitrogen source. In Pyrobaculum aerophilum (strain ATCC 51768 / DSM 7523 / JCM 9630 / CIP 104966 / NBRC 100827 / IM2), this protein is NH(3)-dependent NAD(+) synthetase.